The following is a 400-amino-acid chain: Probable vacuolar protease A (400 aa).

Positions 1-18 are cleaved as a signal peptide; the sequence is MKGSLLLAGATLLGCTSA. Residues 19–72 constitute a propeptide, activation peptide; that stretch reads KLHSLKLKKVSLKEQLEHADIDVQIKSLGQKYMGIRPEQHEQQMFKEQTPIEVE. Positions 87–397 constitute a Peptidase A1 domain; it reads YFSEISIGTP…DLGKGTVGLA (311 aa). The active site involves Asp105. A disulfide bridge connects residues Cys118 and Cys123. Residue Asn140 is glycosylated (N-linked (GlcNAc...) asparagine). Asp289 is an active-site residue. An intrachain disulfide couples Cys323 to Cys356. A glycan (N-linked (GlcNAc...) asparagine) is linked at Asn340.

This sequence belongs to the peptidase A1 family.

It localises to the vacuole lumen. Its subcellular location is the secreted. The catalysed reaction is Hydrolysis of proteins with broad specificity for peptide bonds. Cleaves -Leu-Leu-|-Val-Tyr- bond in a synthetic substrate. Does not act on esters of Tyr or Arg.. Vacuolar aspartic endopeptidase which is probably also secreted and contributes to virulence. This chain is Probable vacuolar protease A (PEP2), found in Arthroderma benhamiae (strain ATCC MYA-4681 / CBS 112371) (Trichophyton mentagrophytes).